The primary structure comprises 225 residues: Cytidylate kinase (225 aa).

12–20 (GPSGAGKGT) is a binding site for ATP.

The protein belongs to the cytidylate kinase family. Type 1 subfamily.

It is found in the cytoplasm. The enzyme catalyses CMP + ATP = CDP + ADP. The catalysed reaction is dCMP + ATP = dCDP + ADP. This is Cytidylate kinase from Stenotrophomonas maltophilia (strain K279a).